A 580-amino-acid chain; its full sequence is Peptidyl-prolyl cis-trans isomerase-like 2 (580 aa).

The 74-residue stretch at 42-115 (KRLPFRFCSL…GEYIDPVTYK (74 aa)) folds into the U-box domain. Disordered regions lie at residues 182 to 201 (IKEGESGLSDEQLREREDPS), 227 to 259 (QERAQKAGNAASTPVAKTDAPVKSAQKTASYQS), 439 to 459 (SPTLNKLETHPVNPTTNRPTP), 479 to 530 (QKKQ…SSTT), and 553 to 580 (FVDEEPTSEPAKKKFKGIGGFGDFSSWD). A PPIase cyclophilin-type domain is found at 309–468 (QKGYARISTT…PDIRIVDVTI (160 aa)). A compositionally biased stretch (polar residues) spans 439–457 (SPTLNKLETHPVNPTTNRP). The span at 490–507 (EANRTAENDEEGSRRAED) shows a compositional bias: basic and acidic residues.

Belongs to the cyclophilin-type PPIase family. PPIL2 subfamily.

The protein localises to the nucleus. It carries out the reaction [protein]-peptidylproline (omega=180) = [protein]-peptidylproline (omega=0). The catalysed reaction is S-ubiquitinyl-[E2 ubiquitin-conjugating enzyme]-L-cysteine + [acceptor protein]-L-lysine = [E2 ubiquitin-conjugating enzyme]-L-cysteine + N(6)-ubiquitinyl-[acceptor protein]-L-lysine.. The protein operates within protein modification; protein ubiquitination. Its function is as follows. May catalyze the cis-trans isomerization of proline imidic peptide bonds in oligopeptides thereby assisting the folding of proteins. May also function as a chaperone, playing a role in intracellular transport of proteins. May also have a protein ubiquitin ligase activity acting as an E3 ubiquitin protein ligase or as a ubiquitin-ubiquitin ligase promoting elongation of ubiquitin chains on proteins. The polypeptide is Peptidyl-prolyl cis-trans isomerase-like 2 (cyp8) (Emericella nidulans (strain FGSC A4 / ATCC 38163 / CBS 112.46 / NRRL 194 / M139) (Aspergillus nidulans)).